The following is a 445-amino-acid chain: tRNA-2-methylthio-N(6)-dimethylallyladenosine synthase (445 aa).

In terms of domain architecture, MTTase N-terminal spans 3–124 (KNLYIKTYGC…LPELISKIVR (122 aa)). [4Fe-4S] cluster is bound by residues C12, C48, C87, C162, C166, and C169. Residues 148-380 (YPQGASSFIS…QKELMDQQLA (233 aa)) enclose the Radical SAM core domain. Residues 383–445 (ESCVGSTIKV…SLNSLTGEIL (63 aa)) form the TRAM domain.

This sequence belongs to the methylthiotransferase family. MiaB subfamily. In terms of assembly, monomer. [4Fe-4S] cluster is required as a cofactor.

The protein resides in the cytoplasm. The enzyme catalyses N(6)-dimethylallyladenosine(37) in tRNA + (sulfur carrier)-SH + AH2 + 2 S-adenosyl-L-methionine = 2-methylsulfanyl-N(6)-dimethylallyladenosine(37) in tRNA + (sulfur carrier)-H + 5'-deoxyadenosine + L-methionine + A + S-adenosyl-L-homocysteine + 2 H(+). Its function is as follows. Catalyzes the methylthiolation of N6-(dimethylallyl)adenosine (i(6)A), leading to the formation of 2-methylthio-N6-(dimethylallyl)adenosine (ms(2)i(6)A) at position 37 in tRNAs that read codons beginning with uridine. The polypeptide is tRNA-2-methylthio-N(6)-dimethylallyladenosine synthase (Rickettsia akari (strain Hartford)).